We begin with the raw amino-acid sequence, 575 residues long: Isocitrate dehydrogenase kinase/phosphatase (575 aa).

Residues 315-321 (APGVKGM) and Lys-336 contribute to the ATP site. Asp-371 is a catalytic residue.

It belongs to the AceK family.

The protein resides in the cytoplasm. The enzyme catalyses L-seryl-[isocitrate dehydrogenase] + ATP = O-phospho-L-seryl-[isocitrate dehydrogenase] + ADP + H(+). Functionally, bifunctional enzyme which can phosphorylate or dephosphorylate isocitrate dehydrogenase (IDH) on a specific serine residue. This is a regulatory mechanism which enables bacteria to bypass the Krebs cycle via the glyoxylate shunt in response to the source of carbon. When bacteria are grown on glucose, IDH is fully active and unphosphorylated, but when grown on acetate or ethanol, the activity of IDH declines drastically concomitant with its phosphorylation. The chain is Isocitrate dehydrogenase kinase/phosphatase from Yersinia enterocolitica serotype O:8 / biotype 1B (strain NCTC 13174 / 8081).